Here is a 248-residue protein sequence, read N- to C-terminus: Ubiquinone/menaquinone biosynthesis C-methyltransferase UbiE (248 aa).

S-adenosyl-L-methionine is bound by residues serine 68, aspartate 92, and 120-121 (NA).

Belongs to the class I-like SAM-binding methyltransferase superfamily. MenG/UbiE family.

The catalysed reaction is a 2-demethylmenaquinol + S-adenosyl-L-methionine = a menaquinol + S-adenosyl-L-homocysteine + H(+). It carries out the reaction a 2-methoxy-6-(all-trans-polyprenyl)benzene-1,4-diol + S-adenosyl-L-methionine = a 5-methoxy-2-methyl-3-(all-trans-polyprenyl)benzene-1,4-diol + S-adenosyl-L-homocysteine + H(+). It participates in quinol/quinone metabolism; menaquinone biosynthesis; menaquinol from 1,4-dihydroxy-2-naphthoate: step 2/2. It functions in the pathway cofactor biosynthesis; ubiquinone biosynthesis. Methyltransferase required for the conversion of demethylmenaquinol (DMKH2) to menaquinol (MKH2) and the conversion of 2-polyprenyl-6-methoxy-1,4-benzoquinol (DDMQH2) to 2-polyprenyl-3-methyl-6-methoxy-1,4-benzoquinol (DMQH2). The chain is Ubiquinone/menaquinone biosynthesis C-methyltransferase UbiE from Rickettsia prowazekii (strain Madrid E).